The primary structure comprises 506 residues: Cytochrome P450 monooxygenase TES1 (506 aa).

The chain crosses the membrane as a helical span at residues 26-46 (MSVVLAGLILLASIYFPRFMF). 4 N-linked (GlcNAc...) asparagine glycosylation sites follow: N167, N201, N298, and N427. Heme is bound at residue C440.

This sequence belongs to the cytochrome P450 family. Requires heme as cofactor.

It localises to the membrane. Its pathway is phytotoxin biosynthesis. Functionally, cytochrome P450 monooxygenase; part of the gene cluster that mediates the biosynthesis of the phytotoxin tentoxin, an inhibitor the F1-ATPase activity of chloroplasts, resulting in chlorosis in sensitive plants. Tentoxin is a cyclic tetrapeptide that consists of four amino acid residues: glycine (Gly), alanine (Ala), leucine (Leu), and dehydrophenylalanine (DPhe). In addition, both the Ala and DPhe residues are N-methylated. The nonribosomal peptide synthetase TES assembles tentoxin from the four substrate amino acids. The adenylation domains of each of the 4 modules are responsible for the activation of Gly, Ala, Leu and DPhe, respectively. In addition, the N-methyltransferase domains in the second and fourth modules of TES could be responsible for N-methylation of Ala and DPhe residues. Finally, the condensation domain located in the termination module probably catalyzes the formation of the intramolecular macrocyclization and then the release of tentoxin. The cytochrome P450 monooxygenase TES1 is predicted to be involved in the formation of DPhe. This chain is Cytochrome P450 monooxygenase TES1, found in Alternaria alternata (Alternaria rot fungus).